Here is a 1581-residue protein sequence, read N- to C-terminus: MAVSRVLSLLATVASMALVIQETHFAAGADMGSCYDGVGRAQRCLPEFENAAFGRRAEASHTCGRPPEDFCPHVGAPGAGLQCQRCDDADPGRRHDASYLTDFHSPDDSTWWQSPSMAFGVQYPTSVNLTLSLGKAYEITYVRLKFHTSRPESFAIYKRTYASGPWEPYQYYSASCQKTYGRPEGHYLRPGEDERVAFCTSEFSDISPLNGGNVAFSTLEGRPSAYNFEESPVLQEWVTSTDILISLDRLNTFGDDIFKDPRVLQSYYYAVSDFSVGGRCKCNGHASECEPNAAGQLACRCQHNTTGVDCERCLPFFQDRPWARGTAEDANECLPCNCSGHSEECTFDRELYRSTGHGGHCQRCRDHTTGPHCERCEKNYYRWSPKTPCQPCDCHPAGSLSLQCDNSGVCPCKPTVTGWKCDRCLPGFHSLSEGGCRPCACNVAGSLGTCDPRSGNCPCKENVEGSLCDRCRPGTFNLQPHNPVGCSSCFCYGHSKVCSPAAGFQEHHIRSDFRHGAGGWQIRSMGVSKRPLQWSQSGLLLGLRGGEELSAPKKFLGDQRLSYGQPVILTLQVPPGGSPPPIQLRLEGAGLALSLRPSSLPSPQDTRQPRRVQLQFLLQETSEEAESPLPTFHFQRLLSNLTALSIWTSGQGPGHSGQVLLCEVQLTSAWPQRELAPPASWVETCLCPQGYTGQFCEFCALGYKREIPHGGPYANCIPCTCNQHGTCDPNTGICLCGHHTEGPSCERCMPGFYGNAFSGRADDCQPCPCPGQSACATIPESGDVVCTHCPPGQRGRRCESCEDGFFGDPLGLSGAPQPCRRCQCSGNVDLNAVGNCDPHSGHCLRCLYNTTGAHCEHCREGFYGSAVATRPVDKCAPCSCDLRGSVSEKTCNPVTGQCVCLPYVSGRDCSRCSPGFYDLQSGRGCQSCKCHPLGSLENKCHPKTGQCPCRPGVTGQACDRCQLGFFGFSIKGCRDCRCSPLGAASSQCHENSTCVCRPGFVGYKCDRCQDNFFLADGDTGCQECPTCYALVKEEAAKLKARLMLMEGWLQRSDCGSPWGPLDILQGEAPLGDVYQGHHLLQETRGTFLQQMVGLEDSVKATWEQLQVLRGHVHCAQAGAQKTCIQLAELEETLQSSEEEVLRAASALSFLASLQKGSSTPTNWSHLASEAQILARSHRDTATKIEATSERALLASNASYELLKLMEGRVASEAQQELEDRYQEVQAAQTALGIAVAEALPKAEKALATVKQVIGDAAPHLGLLVTPEAMNFQARGLSWKVKALEQKLEQKEPEVGQSVGALQVEAGRALEKMEPFMQLRNKTTAAFTRASSAVQAAKVTVIGAETLLADLEGMKLRSPLPKEQAALKKKAGSIRTRLLEDTKRKTKQAERMLGNAASLSSSTKKKSKEAELMSKDNAKLSRALLREGKQGYRHASRLASQTQATLRRASRLLLTSEAHKQELEEAKQVTSGLSTVERQIRESRISLEKDTKVLSELLVKLGSLGVHQAPAQTLNETQRALESLRLQLDSHGALHHKLRQLEEESARQELQIQSFEDDLAEIRADKHNLETILSSLPENCAS.

The signal sequence occupies residues 1–28 (MAVSRVLSLLATVASMALVIQETHFAAG). Positions 40-279 (RAQRCLPEFE…AVSDFSVGGR (240 aa)) constitute a Laminin N-terminal domain. N-linked (GlcNAc...) asparagine glycosylation occurs at N128. Disulfide bonds link C280/C289, C282/C299, C301/C310, C313/C333, C336/C345, C338/C361, C364/C373, C376/C389, C392/C404, C394/C410, C412/C421, C424/C436, C439/C450, C441/C457, C459/C468, and C471/C486. 4 Laminin EGF-like domains span residues 280–335 (CKCN…ECLP), 336–391 (CNCS…PCQP), 392–438 (CDCH…GCRP), and 439–488 (CACN…GCSS). N-linked (GlcNAc...) asparagine glycosylation is present at N304. N-linked (GlcNAc...) asparagine glycosylation is present at N337. The 10-residue stretch at 489–498 (CFCYGHSKVC) folds into the Laminin EGF-like 5; first part domain. Residues 508-684 (HIRSDFRHGA…LAPPASWVET (177 aa)) enclose the Laminin IV type A domain. An N-linked (GlcNAc...) asparagine glycan is attached at N640. The region spanning 685-718 (CLCPQGYTGQFCEFCALGYKREIPHGGPYANCIP) is the Laminin EGF-like 5; second part domain. 24 disulfide bridges follow: C719-C727, C721-C734, C736-C745, C748-C764, C767-C775, C769-C786, C789-C798, C801-C819, C822-C836, C824-C843, C846-C855, C858-C875, C878-C891, C880-C898, C900-C909, C912-C925, C928-C940, C930-C947, C949-C958, C961-C973, C976-C988, C978-C994, C996-C1005, and C1008-C1021. 6 consecutive Laminin EGF-like domains span residues 719 to 766 (CTCN…DCQP), 767 to 821 (CPCP…PCRR), 822 to 877 (CQCS…KCAP), 878 to 927 (CSCD…GCQS), 928 to 975 (CKCH…GCRD), and 976 to 1024 (CRCS…CQEC). A glycan (N-linked (GlcNAc...) asparagine) is linked at N849. N991 carries N-linked (GlcNAc...) asparagine glycosylation. Positions 1025 to 1581 (PTCYALVKEE…LSSLPENCAS (557 aa)) are domain II and I. 2 coiled-coil regions span residues 1029-1046 (ALVKEEAAKLKARLMLME) and 1112-1153 (VHCA…LASL). Residues N1162 and N1196 are each glycosylated (N-linked (GlcNAc...) asparagine). A coiled-coil region spans residues 1208–1231 (RVASEAQQELEDRYQEVQAAQTAL). N-linked (GlcNAc...) asparagine glycosylation is present at N1320. The interval 1382 to 1413 (KRKTKQAERMLGNAASLSSSTKKKSKEAELMS) is disordered. Coiled coils occupy residues 1438–1468 (ASQTQATLRRASRLLLTSEAHKQELEEAKQV) and 1510–1575 (AQTL…LSSL). N1514 carries an N-linked (GlcNAc...) asparagine glycan.

As to quaternary structure, laminin is a complex glycoprotein, consisting of three different polypeptide chains (alpha, beta, gamma), which are bound to each other by disulfide bonds into a cross-shaped molecule comprising one long and three short arms with globules at each end. Gamma-3 is a subunit of laminin-12 (laminin-213), laminin-14 (laminin-423) and laminin-15 (laminin-523). As to expression, strongly expressed in capillaries and arterioles of kidney as well as in interstitial Leydig cells of testis.

Its subcellular location is the secreted. It is found in the extracellular space. The protein resides in the extracellular matrix. It localises to the basement membrane. Functionally, binding to cells via a high affinity receptor, laminin is thought to mediate the attachment, migration and organization of cells into tissues during embryonic development by interacting with other extracellular matrix components. The polypeptide is Laminin subunit gamma-3 (Lamc3) (Mus musculus (Mouse)).